Here is a 100-residue protein sequence, read N- to C-terminus: MPKDKKEAIYTIPLSRVYWGRRTNRAARAIKLVRKFIARHFGVKEEDVIIHNNVNEYIWSRSIEKPPRRVTVKAVKDPETGKVKVMLIRESKIQQGQATS.

The protein belongs to the eukaryotic ribosomal protein eL31 family.

The polypeptide is Large ribosomal subunit protein eL31 (Hyperthermus butylicus (strain DSM 5456 / JCM 9403 / PLM1-5)).